Here is a 232-residue protein sequence, read N- to C-terminus: Octanoyltransferase (232 aa).

A BPL/LPL catalytic domain is found at 32–219 (NIIYDTLILL…SFKVFNFSSY (188 aa)). Residues 77–84 (RGGDITYH), 140–142 (AIG), and 153–155 (GFA) contribute to the substrate site. Catalysis depends on Cys171, which acts as the Acyl-thioester intermediate.

Belongs to the LipB family.

The protein localises to the cytoplasm. It carries out the reaction octanoyl-[ACP] + L-lysyl-[protein] = N(6)-octanoyl-L-lysyl-[protein] + holo-[ACP] + H(+). It functions in the pathway protein modification; protein lipoylation via endogenous pathway; protein N(6)-(lipoyl)lysine from octanoyl-[acyl-carrier-protein]: step 1/2. Its function is as follows. Catalyzes the transfer of endogenously produced octanoic acid from octanoyl-acyl-carrier-protein onto the lipoyl domains of lipoate-dependent enzymes. Lipoyl-ACP can also act as a substrate although octanoyl-ACP is likely to be the physiological substrate. In Dictyoglomus turgidum (strain DSM 6724 / Z-1310), this protein is Octanoyltransferase.